The following is a 156-amino-acid chain: ATP synthase subunit b (156 aa).

A helical transmembrane segment spans residues 12-32 (IAFAIFVLFCMKFIWPALMGA).

It belongs to the ATPase B chain family. As to quaternary structure, F-type ATPases have 2 components, F(1) - the catalytic core - and F(0) - the membrane proton channel. F(1) has five subunits: alpha(3), beta(3), gamma(1), delta(1), epsilon(1). F(0) has three main subunits: a(1), b(2) and c(10-14). The alpha and beta chains form an alternating ring which encloses part of the gamma chain. F(1) is attached to F(0) by a central stalk formed by the gamma and epsilon chains, while a peripheral stalk is formed by the delta and b chains.

Its subcellular location is the cell inner membrane. Its function is as follows. F(1)F(0) ATP synthase produces ATP from ADP in the presence of a proton or sodium gradient. F-type ATPases consist of two structural domains, F(1) containing the extramembraneous catalytic core and F(0) containing the membrane proton channel, linked together by a central stalk and a peripheral stalk. During catalysis, ATP synthesis in the catalytic domain of F(1) is coupled via a rotary mechanism of the central stalk subunits to proton translocation. Functionally, component of the F(0) channel, it forms part of the peripheral stalk, linking F(1) to F(0). The polypeptide is ATP synthase subunit b (Psychrobacter sp. (strain PRwf-1)).